A 226-amino-acid polypeptide reads, in one-letter code: ATP synthase F(0) complex subunit a (226 aa).

The next 6 membrane-spanning stretches (helical) occupy residues 6–26 (FAPF…IMIF), 68–88 (WTLM…LGLL), 97–117 (QLSM…LMGF), 138–158 (IPML…ALAV), 164–184 (ITAG…LSSI), and 193–213 (FTIL…QAYV).

It belongs to the ATPase A chain family. Component of the ATP synthase complex composed at least of ATP5F1A/subunit alpha, ATP5F1B/subunit beta, ATP5MC1/subunit c (homooctomer), MT-ATP6/subunit a, MT-ATP8/subunit 8, ATP5ME/subunit e, ATP5MF/subunit f, ATP5MG/subunit g, ATP5MK/subunit k, ATP5MJ/subunit j, ATP5F1C/subunit gamma, ATP5F1D/subunit delta, ATP5F1E/subunit epsilon, ATP5PF/subunit F6, ATP5PB/subunit b, ATP5PD/subunit d, ATP5PO/subunit OSCP. ATP synthase complex consists of a soluble F(1) head domain (subunits alpha(3) and beta(3)) - the catalytic core - and a membrane F(0) domain - the membrane proton channel (subunits c, a, 8, e, f, g, k and j). These two domains are linked by a central stalk (subunits gamma, delta, and epsilon) rotating inside the F1 region and a stationary peripheral stalk (subunits F6, b, d, and OSCP). Interacts with DNAJC30; interaction is direct.

Its subcellular location is the mitochondrion inner membrane. The catalysed reaction is H(+)(in) = H(+)(out). Subunit a, of the mitochondrial membrane ATP synthase complex (F(1)F(0) ATP synthase or Complex V) that produces ATP from ADP in the presence of a proton gradient across the membrane which is generated by electron transport complexes of the respiratory chain. ATP synthase complex consist of a soluble F(1) head domain - the catalytic core - and a membrane F(1) domain - the membrane proton channel. These two domains are linked by a central stalk rotating inside the F(1) region and a stationary peripheral stalk. During catalysis, ATP synthesis in the catalytic domain of F(1) is coupled via a rotary mechanism of the central stalk subunits to proton translocation. With the subunit c (ATP5MC1), forms the proton-conducting channel in the F(0) domain, that contains two crucial half-channels (inlet and outlet) that facilitate proton movement from the mitochondrial intermembrane space (IMS) into the matrix. Protons are taken up via the inlet half-channel and released through the outlet half-channel, following a Grotthuss mechanism. The protein is ATP synthase F(0) complex subunit a of Ornithorhynchus anatinus (Duckbill platypus).